Here is a 430-residue protein sequence, read N- to C-terminus: Adenylosuccinate synthetase (430 aa).

Residues 13-19 (GDEGKGK) and 41-43 (GHT) contribute to the GTP site. Aspartate 14 serves as the catalytic Proton acceptor. Residues aspartate 14 and glycine 41 each contribute to the Mg(2+) site. IMP is bound by residues 14–17 (DEGK), 39–42 (NAGH), threonine 130, arginine 144, glutamine 225, threonine 240, and arginine 304. Histidine 42 (proton donor) is an active-site residue. 300–306 (ATTGRAR) contributes to the substrate binding site. Residues arginine 306, 332–334 (KLD), and 414–416 (STG) each bind GTP.

Belongs to the adenylosuccinate synthetase family. In terms of assembly, homodimer. Requires Mg(2+) as cofactor.

Its subcellular location is the cytoplasm. It carries out the reaction IMP + L-aspartate + GTP = N(6)-(1,2-dicarboxyethyl)-AMP + GDP + phosphate + 2 H(+). The protein operates within purine metabolism; AMP biosynthesis via de novo pathway; AMP from IMP: step 1/2. Functionally, plays an important role in the de novo pathway of purine nucleotide biosynthesis. Catalyzes the first committed step in the biosynthesis of AMP from IMP. This is Adenylosuccinate synthetase from Pseudomonas paraeruginosa (strain DSM 24068 / PA7) (Pseudomonas aeruginosa (strain PA7)).